Here is a 362-residue protein sequence, read N- to C-terminus: Probable dual-specificity RNA methyltransferase RlmN (362 aa).

The active-site Proton acceptor is the glutamate 105. Residues 111 to 344 enclose the Radical SAM core domain; sequence HEYGNSICVT…VTIRREQGHD (234 aa). The cysteines at positions 118 and 349 are disulfide-linked. 3 residues coordinate [4Fe-4S] cluster: cysteine 125, cysteine 129, and cysteine 132. S-adenosyl-L-methionine is bound by residues 175-176, serine 207, 230-232, and asparagine 306; these read GE and SLH. Cysteine 349 acts as the S-methylcysteine intermediate in catalysis.

The protein belongs to the radical SAM superfamily. RlmN family. [4Fe-4S] cluster serves as cofactor.

Its subcellular location is the cytoplasm. It catalyses the reaction adenosine(2503) in 23S rRNA + 2 reduced [2Fe-2S]-[ferredoxin] + 2 S-adenosyl-L-methionine = 2-methyladenosine(2503) in 23S rRNA + 5'-deoxyadenosine + L-methionine + 2 oxidized [2Fe-2S]-[ferredoxin] + S-adenosyl-L-homocysteine. The enzyme catalyses adenosine(37) in tRNA + 2 reduced [2Fe-2S]-[ferredoxin] + 2 S-adenosyl-L-methionine = 2-methyladenosine(37) in tRNA + 5'-deoxyadenosine + L-methionine + 2 oxidized [2Fe-2S]-[ferredoxin] + S-adenosyl-L-homocysteine. Functionally, specifically methylates position 2 of adenine 2503 in 23S rRNA and position 2 of adenine 37 in tRNAs. This chain is Probable dual-specificity RNA methyltransferase RlmN, found in Bacillus mycoides (strain KBAB4) (Bacillus weihenstephanensis).